The sequence spans 527 residues: Serine/threonine-protein kinase CHK1 (527 aa).

The 267-residue stretch at 15–281 (VVLGDTVGQG…LKALKLHPWV (267 aa)) folds into the Protein kinase domain. Residues 21 to 29 (VGQGAFACV) and lysine 45 each bind ATP. Residue aspartate 142 is the Proton acceptor of the active site.

Belongs to the protein kinase superfamily. CAMK Ser/Thr protein kinase family. NIM1 subfamily.

The protein resides in the nucleus. The enzyme catalyses L-seryl-[protein] + ATP = O-phospho-L-seryl-[protein] + ADP + H(+). The catalysed reaction is L-threonyl-[protein] + ATP = O-phospho-L-threonyl-[protein] + ADP + H(+). In terms of biological role, serine/threonine-protein kinase which is required for checkpoint-mediated cell cycle arrest and activation of DNA repair in response to the presence of DNA damage or unreplicated DNA. May also negatively regulate cell cycle progression during unperturbed cell cycles. Controls phosphorylation and abundance of PDS1 to prevent anaphase entry. Also helps prevent mitotic exit. This chain is Serine/threonine-protein kinase CHK1 (CHK1), found in Saccharomyces cerevisiae (strain ATCC 204508 / S288c) (Baker's yeast).